Reading from the N-terminus, the 610-residue chain is Zinc metalloproteinase-disintegrin-like BITM06A (610 aa).

The first 20 residues, 1–20 (MIQVLLVTICLAAFPYQGSS), serve as a signal peptide directing secretion. Positions 21-189 (IILESGNVND…KKASQLVVTA (169 aa)) are excised as a propeptide. Positions 198–394 (RYVELFIVVD…ENPQCILNEP (197 aa)) constitute a Peptidase M12B domain. Residues Glu201 and Asp285 each contribute to the Ca(2+) site. Disulfide bonds link Cys309–Cys389, Cys349–Cys373, and Cys351–Cys356. Zn(2+) is bound at residue His334. Glu335 is a catalytic residue. Residues His338 and His344 each coordinate Zn(2+). Asn372 is a glycosylation site (N-linked (GlcNAc...) asparagine). Ca(2+)-binding residues include Cys389, Asn392, Val404, Asn407, Leu409, Glu411, Glu414, and Asp417. The region spanning 402-488 (PPVCGNELLE…ECPADVFHKN (87 aa)) is the Disintegrin domain. Cystine bridges form between Cys405–Cys434, Cys416–Cys429, Cys418–Cys424, Cys428–Cys451, Cys442–Cys448, Cys447–Cys473, Cys460–Cys480, Cys467–Cys499, Cys492–Cys504, Cys511–Cys561, Cys526–Cys572, Cys539–Cys549, Cys556–Cys598, and Cys592–Cys603. The D/ECD-tripeptide motif lies at 466-468 (ECD). Ca(2+) is bound by residues Asp468, Pro469, Glu471, Asp483, and Val484.

It belongs to the venom metalloproteinase (M12B) family. P-III subfamily. P-IIIa sub-subfamily. As to quaternary structure, monomer. It depends on Zn(2+) as a cofactor. Expressed by the venom gland.

It localises to the secreted. Its function is as follows. Snake venom metalloproteinase that impairs hemostasis in the envenomed animal. The polypeptide is Zinc metalloproteinase-disintegrin-like BITM06A (Bothrops insularis (Golden lancehead)).